We begin with the raw amino-acid sequence, 146 residues long: Hemoglobin subunit beta (146 aa).

The Globin domain maps to H2 to H146. 2 residues coordinate heme b: H63 and H92.

This sequence belongs to the globin family. In terms of assembly, heterotetramer of two alpha chains and two beta chains. Oxygenation results in dissociation to dimers. Red blood cells.

Functionally, involved in oxygen transport from the lung to the various peripheral tissues. The polypeptide is Hemoglobin subunit beta (HBB) (Erythrolamprus miliaris (South American water snake)).